The sequence spans 161 residues: Negative cofactor 2 complex subunit beta (161 aa).

The 65-residue stretch at 11–75 folds into the Histone-fold domain; it reads SLPKATVQKM…IAAEHIIKAL (65 aa). Over residues 93–107 the composition is skewed to basic and acidic residues; that stretch reads EHKEQQKNREKKSSK. 2 disordered regions span residues 93–116 and 130–161; these read EHKE…VSRD and RERF…TKEN. Over residues 135 to 147 the composition is skewed to polar residues; that stretch reads NQNIAHDNHTTTA.

This sequence belongs to the NC2 beta/DR1 family.

It localises to the cytoplasm. It is found in the nucleus. The sequence is that of Negative cofactor 2 complex subunit beta (ncb2) from Schizosaccharomyces pombe (strain 972 / ATCC 24843) (Fission yeast).